The following is a 217-amino-acid chain: N-(5'-phosphoribosyl)anthranilate isomerase (217 aa).

This sequence belongs to the TrpF family.

The catalysed reaction is N-(5-phospho-beta-D-ribosyl)anthranilate = 1-(2-carboxyphenylamino)-1-deoxy-D-ribulose 5-phosphate. It participates in amino-acid biosynthesis; L-tryptophan biosynthesis; L-tryptophan from chorismate: step 3/5. This chain is N-(5'-phosphoribosyl)anthranilate isomerase, found in Chlorobium luteolum (strain DSM 273 / BCRC 81028 / 2530) (Pelodictyon luteolum).